The primary structure comprises 282 residues: Undecaprenyl-diphosphatase (282 aa).

Helical transmembrane passes span 1-21, 40-60, 85-105, 117-137, 196-216, 229-249, and 258-278; these read MTLF…FLPV, GAAF…IYFY, AAMG…GLLF, YWVS…EWSV, FSFL…LYHT, AITA…AFLI, and SIFI…IAAG.

Belongs to the UppP family.

It localises to the cell inner membrane. It carries out the reaction di-trans,octa-cis-undecaprenyl diphosphate + H2O = di-trans,octa-cis-undecaprenyl phosphate + phosphate + H(+). Functionally, catalyzes the dephosphorylation of undecaprenyl diphosphate (UPP). Confers resistance to bacitracin. The chain is Undecaprenyl-diphosphatase from Chlorobium phaeobacteroides (strain DSM 266 / SMG 266 / 2430).